Consider the following 496-residue polypeptide: GTPase Der (496 aa).

2 consecutive EngA-type G domains span residues 3–166 (PVIA…VGKF) and 209–382 (VKLA…TCAT). GTP-binding positions include 9–16 (GRPNVGKS), 56–60 (DTGGI), 118–121 (NKTD), 215–222 (GRPNVGKS), 262–266 (DTAGV), and 327–330 (NKWD). The region spanning 383–467 (RRVGTSMLTR…PIRIQFKEGE (85 aa)) is the KH-like domain.

Belongs to the TRAFAC class TrmE-Era-EngA-EngB-Septin-like GTPase superfamily. EngA (Der) GTPase family. As to quaternary structure, associates with the 50S ribosomal subunit.

Its function is as follows. GTPase that plays an essential role in the late steps of ribosome biogenesis. This chain is GTPase Der, found in Proteus mirabilis (strain HI4320).